Consider the following 424-residue polypeptide: Deoxyguanosinetriphosphate triphosphohydrolase-like protein (424 aa).

Residues Met-1–Val-27 form a disordered region. Residues Asp-8–Lys-18 show a composition bias toward basic and acidic residues. The region spanning Arg-67–Ser-217 is the HD domain.

The protein belongs to the dGTPase family. Type 2 subfamily.

The sequence is that of Deoxyguanosinetriphosphate triphosphohydrolase-like protein (dgt) from Corynebacterium glutamicum (strain ATCC 13032 / DSM 20300 / JCM 1318 / BCRC 11384 / CCUG 27702 / LMG 3730 / NBRC 12168 / NCIMB 10025 / NRRL B-2784 / 534).